Consider the following 349-residue polypeptide: MTDSKDHHVAGRKLDHLRALDDDADIDRGDSGFDRIALTHRALPEVDFDAIDTATSFLGRELSFPLLISSMTGGTGEEIERINRNLAAGAEEARVAMAVGSQRVMFTDPSARASFDLRAHAPTVPLLANIGAVQLNMGLGLKECLAAIEVLQADGLYLHLNPLQEAVQPEGDRDFADLGSKIAAIARDVPVPVLLKEVGCGLSAADIAIGLRAGIRHFDVAGRGGTSWSRIEYRRRQRADDDLGLVFQDWGLQTVDALREARPALAAHDGTSVLIASGGIRNGVDMAKCVILGADMCGVAAPLLKAAQNSREAVVSAIRKLHLEFRTAMFLLGCGTLADLKDNSSLIRQ.

12–13 is a substrate binding site; it reads RK. FMN contacts are provided by residues S69, 70 to 72, S101, and N129; that span reads SMT. 101–103 is a substrate binding site; sequence SQR. Residue Q164 participates in substrate binding. E165 lines the Mg(2+) pocket. FMN-binding positions include K196, T226, 279 to 281, and 300 to 301; these read GIR and AA.

It belongs to the IPP isomerase type 2 family. As to quaternary structure, homooctamer. Dimer of tetramers. Requires FMN as cofactor. NADPH is required as a cofactor. It depends on Mg(2+) as a cofactor.

The protein localises to the cytoplasm. It catalyses the reaction isopentenyl diphosphate = dimethylallyl diphosphate. Its function is as follows. Involved in the biosynthesis of isoprenoids. Catalyzes the 1,3-allylic rearrangement of the homoallylic substrate isopentenyl (IPP) to its allylic isomer, dimethylallyl diphosphate (DMAPP). In Paracoccus zeaxanthinifaciens, this protein is Isopentenyl-diphosphate delta-isomerase.